Reading from the N-terminus, the 177-residue chain is Dynein light chain Tctex-type 5-A (177 aa).

The protein belongs to the dynein light chain Tctex-type family.

This Xenopus laevis (African clawed frog) protein is Dynein light chain Tctex-type 5-A (Dynlt5-a).